The primary structure comprises 89 residues: Submaxillary mucin (89 aa).

The interval 1-89 (AGSVGRTAGG…VGGSPVATTL (89 aa)) is disordered. O-linked (GalNAc...) serine; partial glycosylation is present at Ser3. O-linked (GalNAc...) threonine; partial glycosylation is found at Thr7 and Thr14. Ser15 carries O-linked (GalNAc...) serine; partial glycosylation. Thr23 is a glycosylation site (O-linked (GalNAc...) threonine; partial). An O-linked (GalNAc...) serine; partial glycan is attached at Ser25. Residue Thr27 is glycosylated (O-linked (GalNAc...) threonine; partial). O-linked (GalNAc...) serine; partial glycosylation occurs at Ser29. Thr34 carries an O-linked (GalNAc...) threonine; partial glycan. Residue Ser38 is glycosylated (O-linked (GalNAc...) serine; partial). Thr42 carries O-linked (GalNAc...) threonine; partial glycosylation. O-linked (GalNAc...) serine; partial glycosylation is found at Ser47 and Ser49. Residue Thr50 is glycosylated (O-linked (GalNAc...) threonine; partial). The O-linked (GalNAc...) serine; partial glycan is linked to Ser54. Residues 56 to 71 (APGTTLAGRAGTTLGP) show a composition bias toward low complexity. O-linked (GalNAc...) threonine; partial glycans are attached at residues Thr59, Thr60, Thr67, and Thr68. Ser73 and Ser76 each carry an O-linked (GalNAc...) serine; partial glycan. An O-linked (GalNAc...) threonine; partial glycan is attached at Thr78. Ser83 carries O-linked (GalNAc...) serine; partial glycosylation.

Post-translationally, heavily O-glycosylated at most but not all Ser and Thr residues. Expressed in the submaxillary salivary gland.

Its subcellular location is the secreted. In Canis lupus familiaris (Dog), this protein is Submaxillary mucin.